The primary structure comprises 228 residues: Ankyrin repeat domain-containing protein 46 (228 aa).

4 ANK repeats span residues 11–40, 44–74, 77–103, and 107–138; these read QTNV…DPNI, RGRT…PLAT, QGNT…KIDI, and QGAT…EVKG. The helical transmembrane segment at 195-215 threads the bilayer; the sequence is VLLLILVIALLSLGIAYYVSG.

The protein localises to the membrane. The polypeptide is Ankyrin repeat domain-containing protein 46 (Ankrd46) (Mus musculus (Mouse)).